The primary structure comprises 335 residues: Eukaryotic translation initiation factor 3 subunit H-A (335 aa).

The MPN domain maps to 22–156 (IQVDGLVVLK…LKAYRLTPKL (135 aa)). Residues 254-272 (QQQKQQYQQRRQQENAQRQ) are compositionally biased toward low complexity. Residues 254 to 282 (QQQKQQYQQRRQQENAQRQSRGEPPLPEE) are disordered.

It belongs to the eIF-3 subunit H family. As to quaternary structure, component of the eukaryotic translation initiation factor 3 (eIF-3) complex, which is composed of 13 subunits: eif3a, eif3b, eif3c, eif3d, eif3e, eif3f, eif3g, eif3h, eif3i, eif3j, eif3k, eif3l and eif3m.

It localises to the cytoplasm. In terms of biological role, component of the eukaryotic translation initiation factor 3 (eIF-3) complex, which is involved in protein synthesis of a specialized repertoire of mRNAs and, together with other initiation factors, stimulates binding of mRNA and methionyl-tRNAi to the 40S ribosome. The eIF-3 complex specifically targets and initiates translation of a subset of mRNAs involved in cell proliferation. In Danio rerio (Zebrafish), this protein is Eukaryotic translation initiation factor 3 subunit H-A (eif3ha).